A 158-amino-acid chain; its full sequence is NAD(P)H-quinone oxidoreductase subunit J, chloroplastic (158 aa).

Belongs to the complex I 30 kDa subunit family. In terms of assembly, NDH is composed of at least 16 different subunits, 5 of which are encoded in the nucleus.

Its subcellular location is the plastid. It localises to the chloroplast thylakoid membrane. It catalyses the reaction a plastoquinone + NADH + (n+1) H(+)(in) = a plastoquinol + NAD(+) + n H(+)(out). The enzyme catalyses a plastoquinone + NADPH + (n+1) H(+)(in) = a plastoquinol + NADP(+) + n H(+)(out). Its function is as follows. NDH shuttles electrons from NAD(P)H:plastoquinone, via FMN and iron-sulfur (Fe-S) centers, to quinones in the photosynthetic chain and possibly in a chloroplast respiratory chain. The immediate electron acceptor for the enzyme in this species is believed to be plastoquinone. Couples the redox reaction to proton translocation, and thus conserves the redox energy in a proton gradient. In Panax ginseng (Korean ginseng), this protein is NAD(P)H-quinone oxidoreductase subunit J, chloroplastic.